The following is a 417-amino-acid chain: Tyrosine--tRNA ligase (417 aa).

L-tyrosine is bound at residue Tyr39. The 'HIGH' region signature appears at 44 to 53; it reads PTASSLHAGS. L-tyrosine-binding residues include Tyr176 and Gln180. The 'KMSKS' region motif lies at 236 to 240; that stretch reads KMGKS. Lys239 lines the ATP pocket. The S4 RNA-binding domain maps to 350 to 417; sequence AGLLALLVQA…KKKHVLIKPL (68 aa).

The protein belongs to the class-I aminoacyl-tRNA synthetase family. TyrS type 1 subfamily. Homodimer.

It localises to the cytoplasm. The catalysed reaction is tRNA(Tyr) + L-tyrosine + ATP = L-tyrosyl-tRNA(Tyr) + AMP + diphosphate + H(+). In terms of biological role, catalyzes the attachment of tyrosine to tRNA(Tyr) in a two-step reaction: tyrosine is first activated by ATP to form Tyr-AMP and then transferred to the acceptor end of tRNA(Tyr). This chain is Tyrosine--tRNA ligase, found in Bartonella quintana (strain Toulouse) (Rochalimaea quintana).